The chain runs to 668 residues: ATP-dependent RNA helicase MSS116, mitochondrial (668 aa).

Residues 1–38 (MLKQLSRSLGIRSSPIVANLIRSKQVCTRGFHISLVKQ) constitute a mitochondrion transit peptide. The short motif at 87–115 (DFKGKGYIHDSIINSLHKNDFKELTPIQQ) is the Q motif element. The Helicase ATP-binding domain occupies 119 to 300 (VPIFNTEKGL…KKHIHPEYEF (182 aa)). 132 to 139 (AKTGTGKT) provides a ligand contact to ATP. Residues 242–245 (DEAD) carry the DEAD box motif. The region spanning 332-501 (SLSELHGIMK…NIIDQIESPL (170 aa)) is the Helicase C-terminal domain. Positions 585–668 (YSDFSRSGMS…EHRRIRDHDE (84 aa)) are disordered. The segment covering 586-597 (SDFSRSGMSQRP) has biased composition (polar residues). Residues 609-636 (NGRGKYGNNRNNDWSYQNKNRYNNNNNR) show a composition bias toward low complexity. Basic and acidic residues predominate over residues 637 to 668 (QTERSYDSDRKSHNDWKYEKKFEHRRIRDHDE).

Belongs to the DEAD box helicase family. DDX18/HAS1 subfamily.

The protein localises to the mitochondrion matrix. It catalyses the reaction ATP + H2O = ADP + phosphate + H(+). Functionally, ATP-dependent RNA helicase required for mitochondrial splicing of group I and II introns. Also required for efficient mitochondrial translation. The chain is ATP-dependent RNA helicase MSS116, mitochondrial (MSS116) from Candida albicans (strain SC5314 / ATCC MYA-2876) (Yeast).